Here is a 156-residue protein sequence, read N- to C-terminus: ATP synthase subunit b (156 aa).

Residues 7 to 29 traverse the membrane as a helical segment; the sequence is LIGQMGTFLVFWWFVNKVIWPMF.

Belongs to the ATPase B chain family. As to quaternary structure, F-type ATPases have 2 components, F(1) - the catalytic core - and F(0) - the membrane proton channel. F(1) has five subunits: alpha(3), beta(3), gamma(1), delta(1), epsilon(1). F(0) has three main subunits: a(1), b(2) and c(10-14). The alpha and beta chains form an alternating ring which encloses part of the gamma chain. F(1) is attached to F(0) by a central stalk formed by the gamma and epsilon chains, while a peripheral stalk is formed by the delta and b chains.

Its subcellular location is the cell inner membrane. F(1)F(0) ATP synthase produces ATP from ADP in the presence of a proton or sodium gradient. F-type ATPases consist of two structural domains, F(1) containing the extramembraneous catalytic core and F(0) containing the membrane proton channel, linked together by a central stalk and a peripheral stalk. During catalysis, ATP synthesis in the catalytic domain of F(1) is coupled via a rotary mechanism of the central stalk subunits to proton translocation. Functionally, component of the F(0) channel, it forms part of the peripheral stalk, linking F(1) to F(0). This is ATP synthase subunit b from Dichelobacter nodosus (strain VCS1703A).